The chain runs to 1377 residues: Dicer-like protein 2 (1377 aa).

Positions 23–203 constitute a Helicase ATP-binding domain; sequence MFEASLKENI…MKTLESNLDS (181 aa). ATP is bound at residue 36–43; that stretch reads MDTGTGKT. The short motif at 144-147 is the DEAH box element; that stretch reads DEAH. The 164-residue stretch at 368-531 folds into the Helicase C-terminal domain; the sequence is ALINFLDKFD…AYQDEERRLR (164 aa). Residues 561-655 enclose the Dicer dsRNA-binding fold domain; that stretch reads VVTHLYHFCA…LPLTKNPEMR (95 aa). RNase III domains lie at 914–1052 and 1092–1275; these read RLCA…LDGG and DGDL…VDSG. The Mg(2+) site is built by Glu1131, Asp1261, and Glu1264.

Belongs to the helicase family. Dicer subfamily. Mg(2+) serves as cofactor. Mn(2+) is required as a cofactor.

Dicer-like endonuclease involved in cleaving double-stranded RNA in the RNA interference (RNAi) pathway. Produces 21 to 25 bp dsRNAs (siRNAs) which target the selective destruction of homologous RNAs leading to sequence-specific suppression of gene expression, called post-transcriptional gene silencing (PTGS). Part of a broad host defense response against viral infection and transposons. The polypeptide is Dicer-like protein 2 (dcl2) (Aspergillus oryzae (strain ATCC 42149 / RIB 40) (Yellow koji mold)).